The chain runs to 445 residues: Proton extrusion protein PxcA (445 aa).

4 helical membrane passes run 227–247, 322–342, 369–389, and 405–425; these read FILLLIIVPLLTQQLTKTFLI, AIANIFADICSLIAFGFVVAF, LIILFTDIFVGFHSPHGWEVI, and FNFLFIATFPVILDTVLKYWI.

This sequence belongs to the CemA family.

The protein localises to the cell inner membrane. In terms of biological role, required for H(+) efflux immediately after light irradiation to form a rapid H(+) concentration gradient across the thylakoid membranes. Together with PxcL, contributes to transient H(+) uptake following dark to light transition. The polypeptide is Proton extrusion protein PxcA (Microcystis aeruginosa (strain NIES-843 / IAM M-2473)).